A 111-amino-acid polypeptide reads, in one-letter code: Small ribosomal subunit protein bS16 (111 aa).

This sequence belongs to the bacterial ribosomal protein bS16 family.

This Rickettsia prowazekii (strain Madrid E) protein is Small ribosomal subunit protein bS16.